The primary structure comprises 218 residues: uncharacterized protein (218 aa).

This is an uncharacterized protein from Mycoplasma pneumoniae (strain ATCC 29342 / M129 / Subtype 1) (Mycoplasmoides pneumoniae).